The chain runs to 867 residues: MIKSTNEIRQGFRDFFVNKGHQSVSTGSLVPHDDPTLLFTNAGMNQFKDTYLGTEKRAYTRATSSQCCVRAGGKHNDLDNVGYTARHHTFFEMLGNFSFGDYFKREAIGFAWEYLTVELGLPKDKLWVTVFDEDLEAEKIWIEEIGVDPKCVLRIGAKDNFWSMGDTGPCGPCSEIFYDHGEDVWGGPPGTAEEDGDRFIEIWNIVFMQYNRHADGTMENLPKPSVDTGMGLERISAIMQNCHSNYEIDLFQGLIKKVAEVTGASDLEDKSLRVVADHIRSCGFLICDGVMPSNEGRGYVLRRIIRRAVRHGHKLGAKDIFFFKIYDELINQMGDAYPELSKQRLFVEKILRREEEQFAKTLDRGLQILDNELDHLEGQVIPGDVVFKLYDTFGFPADLTADIARERGLTIDEAGFDKAMAEQRKRAQQANNFGIDYNKTLIIDQKTEFIGYETLQGAATVTHLVVEGAFVNALKEGDSGQVILSATPFYAEAGGQSGDAGKLILNNGVFVVTDTKKSGDAFVHSGYVGMGSVKVNDKVHAEVDTARRQSIALHHSATHLLHAALRKTLGEHVTQKGSLVDADKLRFDFSHFEALSADSLSEVTFLVNEAIRNNYEVVTKLMDIEEAKSSNAMALFGEKYDEMVRVVQMGDFSTELCGGTHAKRTGDLGLFLIRSESGIAAGVRRIEATVGSAADQVISELLYEVDKACGLVRGDHVNLGEKIEQLVDRSKLLEKEVAELKAKIASAAGANLIDNAIEINGVKVVIANIEGIDPKLLRDSVDQMKNKMQSGIVVLATVAADDKVSLIAGVSKDLIKKVKAGELVNLVAGPVGGKGGGRPDMAMAGGNNPAALADALALVAPWLSERL.

Positions 555, 559, 657, and 661 each coordinate Zn(2+).

This sequence belongs to the class-II aminoacyl-tRNA synthetase family. Requires Zn(2+) as cofactor.

Its subcellular location is the cytoplasm. It catalyses the reaction tRNA(Ala) + L-alanine + ATP = L-alanyl-tRNA(Ala) + AMP + diphosphate. Catalyzes the attachment of alanine to tRNA(Ala) in a two-step reaction: alanine is first activated by ATP to form Ala-AMP and then transferred to the acceptor end of tRNA(Ala). Also edits incorrectly charged Ser-tRNA(Ala) and Gly-tRNA(Ala) via its editing domain. This Psychromonas ingrahamii (strain DSM 17664 / CCUG 51855 / 37) protein is Alanine--tRNA ligase.